The sequence spans 148 residues: Putative pre-16S rRNA nuclease (148 aa).

The protein belongs to the YqgF nuclease family.

The protein resides in the cytoplasm. Functionally, could be a nuclease involved in processing of the 5'-end of pre-16S rRNA. This is Putative pre-16S rRNA nuclease from Chlamydia muridarum (strain MoPn / Nigg).